The primary structure comprises 482 residues: Ribosomal protein S6 kinase beta-2 (482 aa).

The disordered stretch occupies residues 1–26 (MAAVFDLDLETEEGSEGEGEPELSPA). Residues 7–21 (LDLETEEGSEGEGEP) are compositionally biased toward acidic residues. The residue at position 15 (serine 15) is a Phosphoserine. A Protein kinase domain is found at 67–328 (FELLRVLGKG…AADVQRHPFF (262 aa)). Residues 73 to 81 (LGKGGYGKV) and lysine 99 each bind ATP. Aspartate 194 serves as the catalytic Proton acceptor. Residues 329–399 (RHMNWDDLLA…VAPSVLDSIK (71 aa)) enclose the AGC-kinase C-terminal domain. The segment at 407 to 482 (KLRSPRRLNS…SKRGRGRPGR (76 aa)) is disordered. 2 positions are modified to phosphoserine: serine 417 and serine 423. Over residues 437–466 (PSLPEPTELPLPPLLPPPPPSTTAPLPIRP) the composition is skewed to pro residues. A Nuclear localization signal motif is present at residues 471-477 (KKSKRGR). The segment covering 471 to 482 (KKSKRGRGRPGR) has biased composition (basic residues). At serine 473 the chain carries Phosphoserine; by PKC.

It belongs to the protein kinase superfamily. AGC Ser/Thr protein kinase family. S6 kinase subfamily. In terms of processing, phosphorylated and activated by MTOR. Phosphorylation by PKC within the NLS in response to mitogenic stimuli causes cytoplasmic retention.

The protein resides in the cytoplasm. The protein localises to the nucleus. It carries out the reaction L-seryl-[protein] + ATP = O-phospho-L-seryl-[protein] + ADP + H(+). It catalyses the reaction L-threonyl-[protein] + ATP = O-phospho-L-threonyl-[protein] + ADP + H(+). In terms of biological role, phosphorylates specifically ribosomal protein S6. Seems to act downstream of mTOR signaling in response to growth factors and nutrients to promote cell proliferation, cell growth and cell cycle progression in an alternative pathway regulated by MEAK7. This is Ribosomal protein S6 kinase beta-2 (RPS6KB2) from Homo sapiens (Human).